The chain runs to 200 residues: Phospholipase D (200 aa).

A signal peptide spans 1–25; the sequence is MKRKNNKFIEISIAFILGVALGIYG. Residues 142-169 form the PLD phosphodiesterase domain; it reads VPGIAHNKVIIIDRKKVITGSFNFTAAA. Residues His147, Lys149, and Asp154 contribute to the active site.

The protein belongs to the phospholipase D family. As to quaternary structure, homodimer.

It is found in the secreted. The enzyme catalyses a 1,2-diacyl-sn-glycero-3-phosphocholine + H2O = a 1,2-diacyl-sn-glycero-3-phosphate + choline + H(+). Its function is as follows. Could be a virulence factor. In Rickettsia felis (strain ATCC VR-1525 / URRWXCal2) (Rickettsia azadi), this protein is Phospholipase D (pld).